The primary structure comprises 329 residues: GMP reductase (329 aa).

The Thioimidate intermediate role is filled by C178. NADP(+) is bound at residue 207 to 230; sequence VIADGGIRTHGDIAKSIRMGATMV.

Belongs to the IMPDH/GMPR family. GuaC type 2 subfamily.

It catalyses the reaction IMP + NH4(+) + NADP(+) = GMP + NADPH + 2 H(+). Its function is as follows. Catalyzes the irreversible NADPH-dependent deamination of GMP to IMP. It functions in the conversion of nucleobase, nucleoside and nucleotide derivatives of G to A nucleotides, and in maintaining the intracellular balance of A and G nucleotides. This is GMP reductase from Lactococcus lactis subsp. cremoris (strain SK11).